Consider the following 500-residue polypeptide: NAD(P)H-quinone oxidoreductase chain 4, chloroplastic (500 aa).

A run of 14 helical transmembrane segments spans residues 4-24 (FPWLTIIVVFPILTGSLIFLL), 37-57 (LCICILELLLTTYTFCYHFQL), 87-107 (IGPILLTGFITTLATLAAWPV), 111-131 (AQLFHFLMLAMYSGQIGSFSS), 134-154 (LLLFFLMWEFELIPVYLLLSM), 167-187 (FILYTAGGSIFLLIGVLGIGL), 208-228 (ALEVIFYVGFLIAFAVKLPII), 242-262 (HYSTCMLLAGILLKMGAYGLV), 272-292 (AHCLFSPGLIIVGAIQIIYAA), 305-325 (IAYSSISHMGFIIIGIGSLSD), 330-350 (GAILQIISHGFIGAALFFLAG), 386-406 (LALPGLSGFVAELLVFFGIIT), 416-436 (ILIAFLMAIGMILTPIYSLSM), and 462-482 (LFVSISLLLPIIGIGIYPDFV).

It belongs to the complex I subunit 4 family.

It localises to the plastid. Its subcellular location is the chloroplast thylakoid membrane. It carries out the reaction a plastoquinone + NADH + (n+1) H(+)(in) = a plastoquinol + NAD(+) + n H(+)(out). The catalysed reaction is a plastoquinone + NADPH + (n+1) H(+)(in) = a plastoquinol + NADP(+) + n H(+)(out). The chain is NAD(P)H-quinone oxidoreductase chain 4, chloroplastic from Oenothera parviflora (Small-flowered evening primrose).